Reading from the N-terminus, the 692-residue chain is DNA ligase (692 aa).

Residues 34–38 (DAEYD), 83–84 (SL), and Glu-124 each bind NAD(+). The active-site N6-AMP-lysine intermediate is Lys-126. Positions 147, 193, 310, and 334 each coordinate NAD(+). Zn(2+) is bound by residues Cys-428, Cys-431, Cys-446, and Cys-452. A BRCT domain is found at 612-692 (AGVAGVSGKT…ALLALLAGNA (81 aa)).

This sequence belongs to the NAD-dependent DNA ligase family. LigA subfamily. It depends on Mg(2+) as a cofactor. Mn(2+) is required as a cofactor.

The catalysed reaction is NAD(+) + (deoxyribonucleotide)n-3'-hydroxyl + 5'-phospho-(deoxyribonucleotide)m = (deoxyribonucleotide)n+m + AMP + beta-nicotinamide D-nucleotide.. Functionally, DNA ligase that catalyzes the formation of phosphodiester linkages between 5'-phosphoryl and 3'-hydroxyl groups in double-stranded DNA using NAD as a coenzyme and as the energy source for the reaction. It is essential for DNA replication and repair of damaged DNA. In Laribacter hongkongensis (strain HLHK9), this protein is DNA ligase.